The chain runs to 214 residues: MEAPEWLDNAVDLGTSIMAVEYDGGVIMGADSRTTTGAYIANRVTNKITPIHERIYCCRSGSAADTQAISDYVRYYLEMHTSELCDEPDVKTAASLFQLLCYSNKNNLMAGIIVAGWDKHQGGSVYNISLGGSMVKQPFAIGGSGSTYIYGYCDSKFKPKMTKDECIEFVQNSLALAMFRDGSSGGVIRLCIIDKNGVERKMIPGNNLPRFWEG.

Positions 1-14 are cleaved as a propeptide — removed in mature form; sequence MEAPEWLDNAVDLG. Residue Thr15 is the Nucleophile of the active site.

It belongs to the peptidase T1B family. The 26S proteasome consists of a 20S proteasome core and two 19S regulatory subunits. The 20S proteasome core is composed of 28 subunits that are arranged in four stacked rings, resulting in a barrel-shaped structure. The two end rings are each formed by seven alpha subunits, and the two central rings are each formed by seven beta subunits. The catalytic chamber with the active sites is on the inside of the barrel.

It is found in the cytoplasm. It localises to the nucleus. The enzyme catalyses Cleavage of peptide bonds with very broad specificity.. In terms of biological role, the proteasome is a multicatalytic proteinase complex which is characterized by its ability to cleave peptides with Arg, Phe, Tyr, Leu, and Glu adjacent to the leaving group at neutral or slightly basic pH. The proteasome has an ATP-dependent proteolytic activity. The sequence is that of Proteasome subunit beta type-6 (psmB6) from Dictyostelium discoideum (Social amoeba).